The primary structure comprises 130 residues: Protein UL145 (130 aa).

As to quaternary structure, interacts with host DDB1; this interaction promotes STAT2 degradation.

Functionally, plays a role in the inhibition of host innate immunity by exploiting host DDB1-cullin RING ubiquitin ligases (CRLs). Mechanistically, recruits host DDB1 via a DCAF-like interaction motif to antagonize IFN signaling by STAT2 degradation. The sequence is that of Protein UL145 (UL145) from Homo sapiens (Human).